A 434-amino-acid polypeptide reads, in one-letter code: Methylenetetrahydrofolate--tRNA-(uracil-5-)-methyltransferase TrmFO (434 aa).

9-14 (GGGLAG) is an FAD binding site.

Belongs to the MnmG family. TrmFO subfamily. It depends on FAD as a cofactor.

Its subcellular location is the cytoplasm. The catalysed reaction is uridine(54) in tRNA + (6R)-5,10-methylene-5,6,7,8-tetrahydrofolate + NADH + H(+) = 5-methyluridine(54) in tRNA + (6S)-5,6,7,8-tetrahydrofolate + NAD(+). It carries out the reaction uridine(54) in tRNA + (6R)-5,10-methylene-5,6,7,8-tetrahydrofolate + NADPH + H(+) = 5-methyluridine(54) in tRNA + (6S)-5,6,7,8-tetrahydrofolate + NADP(+). Its function is as follows. Catalyzes the folate-dependent formation of 5-methyl-uridine at position 54 (M-5-U54) in all tRNAs. The sequence is that of Methylenetetrahydrofolate--tRNA-(uracil-5-)-methyltransferase TrmFO from Geobacter sulfurreducens (strain ATCC 51573 / DSM 12127 / PCA).